A 383-amino-acid polypeptide reads, in one-letter code: ATP phosphoribosyltransferase regulatory subunit (383 aa).

It belongs to the class-II aminoacyl-tRNA synthetase family. HisZ subfamily. Heteromultimer composed of HisG and HisZ subunits.

It localises to the cytoplasm. It participates in amino-acid biosynthesis; L-histidine biosynthesis; L-histidine from 5-phospho-alpha-D-ribose 1-diphosphate: step 1/9. In terms of biological role, required for the first step of histidine biosynthesis. May allow the feedback regulation of ATP phosphoribosyltransferase activity by histidine. This chain is ATP phosphoribosyltransferase regulatory subunit, found in Neisseria gonorrhoeae (strain ATCC 700825 / FA 1090).